The sequence spans 164 residues: Lipoprotein signal peptidase (164 aa).

The next 4 membrane-spanning stretches (helical) occupy residues 11–31 (YWVL…AVLS), 41–61 (VIPS…FSFL), 64–84 (QGGW…AYLV), and 92–112 (FATL…GNVI). Residues aspartate 122 and aspartate 140 contribute to the active site. A helical membrane pass occupies residues 132 to 152 (FYPAFNIADSFICVGAVLAVL).

Belongs to the peptidase A8 family.

The protein resides in the cell inner membrane. It catalyses the reaction Release of signal peptides from bacterial membrane prolipoproteins. Hydrolyzes -Xaa-Yaa-Zaa-|-(S,diacylglyceryl)Cys-, in which Xaa is hydrophobic (preferably Leu), and Yaa (Ala or Ser) and Zaa (Gly or Ala) have small, neutral side chains.. Its pathway is protein modification; lipoprotein biosynthesis (signal peptide cleavage). Its function is as follows. This protein specifically catalyzes the removal of signal peptides from prolipoproteins. The protein is Lipoprotein signal peptidase of Neisseria meningitidis serogroup C (strain 053442).